The following is a 203-amino-acid chain: ATP-dependent Clp protease proteolytic subunit (203 aa).

Serine 107 functions as the Nucleophile in the catalytic mechanism. Residue histidine 132 is part of the active site.

It belongs to the peptidase S14 family. Fourteen ClpP subunits assemble into 2 heptameric rings which stack back to back to give a disk-like structure with a central cavity, resembling the structure of eukaryotic proteasomes.

The protein localises to the cytoplasm. The enzyme catalyses Hydrolysis of proteins to small peptides in the presence of ATP and magnesium. alpha-casein is the usual test substrate. In the absence of ATP, only oligopeptides shorter than five residues are hydrolyzed (such as succinyl-Leu-Tyr-|-NHMec, and Leu-Tyr-Leu-|-Tyr-Trp, in which cleavage of the -Tyr-|-Leu- and -Tyr-|-Trp bonds also occurs).. Cleaves peptides in various proteins in a process that requires ATP hydrolysis. Has a chymotrypsin-like activity. Plays a major role in the degradation of misfolded proteins. This Shewanella woodyi (strain ATCC 51908 / MS32) protein is ATP-dependent Clp protease proteolytic subunit.